The chain runs to 127 residues: Large ribosomal subunit protein bL12 (127 aa).

Residues 98–127 (PKPVKNGVSKEEAEEAKKQLVESGAEVEIK) are disordered. The segment covering 105 to 117 (VSKEEAEEAKKQL) has biased composition (basic and acidic residues).

The protein belongs to the bacterial ribosomal protein bL12 family. As to quaternary structure, homodimer. Part of the ribosomal stalk of the 50S ribosomal subunit. Forms a multimeric L10(L12)X complex, where L10 forms an elongated spine to which 2 to 4 L12 dimers bind in a sequential fashion. Binds GTP-bound translation factors.

In terms of biological role, forms part of the ribosomal stalk which helps the ribosome interact with GTP-bound translation factors. Is thus essential for accurate translation. This chain is Large ribosomal subunit protein bL12, found in Geobacter sulfurreducens (strain ATCC 51573 / DSM 12127 / PCA).